The primary structure comprises 355 residues: S-adenosylmethionine:tRNA ribosyltransferase-isomerase (355 aa).

Belongs to the QueA family. Monomer.

It localises to the cytoplasm. It catalyses the reaction 7-aminomethyl-7-carbaguanosine(34) in tRNA + S-adenosyl-L-methionine = epoxyqueuosine(34) in tRNA + adenine + L-methionine + 2 H(+). Its pathway is tRNA modification; tRNA-queuosine biosynthesis. Transfers and isomerizes the ribose moiety from AdoMet to the 7-aminomethyl group of 7-deazaguanine (preQ1-tRNA) to give epoxyqueuosine (oQ-tRNA). This Jannaschia sp. (strain CCS1) protein is S-adenosylmethionine:tRNA ribosyltransferase-isomerase.